A 145-amino-acid chain; its full sequence is 3-dehydroquinate dehydratase (145 aa).

The Proton acceptor role is filled by Tyr-24. 3 residues coordinate substrate: Asn-75, His-81, and Asp-88. The Proton donor role is filled by His-101. Residues 102–103 (IS) and Arg-112 each bind substrate.

Belongs to the type-II 3-dehydroquinase family. Homododecamer.

The catalysed reaction is 3-dehydroquinate = 3-dehydroshikimate + H2O. Its pathway is metabolic intermediate biosynthesis; chorismate biosynthesis; chorismate from D-erythrose 4-phosphate and phosphoenolpyruvate: step 3/7. Catalyzes a trans-dehydration via an enolate intermediate. This is 3-dehydroquinate dehydratase from Rhizobium etli (strain CIAT 652).